Reading from the N-terminus, the 928-residue chain is MORC family CW-type zinc finger protein 4 (928 aa).

The CW-type zinc finger occupies arginine 417–arginine 469. Positions 426, 429, 450, and 461 each coordinate Zn(2+). Disordered stretches follow at residues leucine 474–leucine 510, asparagine 527–lysine 546, alanine 599–glutamine 649, and arginine 718–threonine 766. Residues alanine 485 to lysine 497 are compositionally biased toward basic and acidic residues. Composition is skewed to basic and acidic residues over residues glutamate 626 to glutamate 636, lysine 739 to serine 748, and threonine 756 to threonine 766. Positions lysine 758–serine 867 form a coiled coil.

It is found in the nucleus. Its function is as follows. Histone methylation reader which binds to non-methylated (H3K4me0), monomethylated (H3K4me1), dimethylated (H3K4me2) and trimethylated (H3K4me3) 'Lys-4' on histone H3. The order of binding preference is H3K4me3 &gt; H3K4me2 &gt; H3K4me1 &gt; H3K4me0. The chain is MORC family CW-type zinc finger protein 4 (Morc4) from Mus musculus (Mouse).